The sequence spans 873 residues: MGLKARRAAGAAGGGGGEGGGGGGGAANPAGGDSAVAGDEERKVGLAPGDVEQVTLALGTGADKDGTLLLEGGGREEGQRRTPQGIGLLAKTPLSRPVKRNNAKYRRIQTLIYDALERPRGWALLYHALVFLIVLGCLILAVLTTFKEYETVSGDWLLLLETFAIFIFGAEFALRIWAAGCCCRYKGWRGRLKFARKPLCMLDIFVLIASVPVVAVGNQGNVLATSLRSLRFLQILRMLRMDRRGGTWKLLGSAICAHSKELITAWYIGFLTLILSSFLVYLVEKDVPEMDAQGEEMKEEFETYADALWWGLITLATIGYGDKTPKTWEGRLIAATFSLIGVSFFALPAGILGSGLALKVQEQHRQKHFEKRRKPAAELIQAAWRYYATNPNRLDLVATWRFYESVVSFPFFRKEQLEAAASQKLGLLDRVRLSNPRGSNTKGKLFTPLNVDAIEESPSKEPKPVGLNNKERFRTAFRMKAYAFWQSSEDAGTGDPMTEDRGYGNDFLIEDMIPTLKAAIRAVRILQFRLYKKKFKETLRPYDVKDVIEQYSAGHLDMLSRIKYLQTRIDMIFTPGPPSTPKHKKSQKGSAFTYPSQQSPRNEPYVARAATSETEDQSMMGKFVKVERQVHDMGKKLDFLVDMHMQHMERLQVHVTEYYPTKGASSPAEGEKKEDNRYSDLKTIICNYSESGPPDPPYSFHQVPIDRVGPYGFFAHDPVKLTRGGPSSTKAQANLPSSGSTYAERPTVLPILTLLDSCVSYHSQTELQGPYSDHISPRQRRSITRDSDTPLSLMSVNHEELERSPSGFSISQDRDDYVFGPSGGSSWMREKRYLAEGETDTDTDPFTPSGSMPMSSTGDGISDSIWTPSNKPT.

Residues 1 to 41 (MGLKARRAAGAAGGGGGEGGGGGGGAANPAGGDSAVAGDEE) are disordered. Residues 1–121 (MGLKARRAAG…IYDALERPRG (121 aa)) are Cytoplasmic-facing. The span at 11-26 (AAGGGGGEGGGGGGGA) shows a compositional bias: gly residues. The residue at position 82 (Thr82) is a Phosphothreonine. The helical transmembrane segment at 122-144 (WALLYHALVFLIVLGCLILAVLT) threads the bilayer. The Extracellular portion of the chain corresponds to 145–154 (TFKEYETVSG). The chain crosses the membrane as a helical span at residues 155-176 (DWLLLLETFAIFIFGAEFALRI). The Cytoplasmic segment spans residues 177-194 (WAAGCCCRYKGWRGRLKF). The chain crosses the membrane as a helical span at residues 195-214 (ARKPLCMLDIFVLIASVPVV). The Extracellular portion of the chain corresponds to 215-226 (AVGNQGNVLATS). The chain crosses the membrane as a helical; Voltage-sensor span at residues 227–245 (LRSLRFLQILRMLRMDRRG). Arg244 is an a 1,2-diacyl-sn-glycero-3-phospho-(1D-myo-inositol-4,5-bisphosphate) binding site. Residues 246 to 257 (GTWKLLGSAICA) are Cytoplasmic-facing. The helical transmembrane segment at 258 to 283 (HSKELITAWYIGFLTLILSSFLVYLV) threads the bilayer. Residue Lys260 coordinates a 1,2-diacyl-sn-glycero-3-phospho-(1D-myo-inositol-4,5-bisphosphate). Over 284 to 303 (EKDVPEMDAQGEEMKEEFET) the chain is Extracellular. An intramembrane region (pore-forming) is located at residues 304–316 (YADALWWGLITLA). Positions 317–322 (TIGYGD) match the Selectivity filter motif. Residues 317–327 (TIGYGDKTPKT) lie on the Extracellular side of the membrane. The chain crosses the membrane as a helical span at residues 328–354 (WEGRLIAATFSLIGVSFFALPAGILGS). The Cytoplasmic portion of the chain corresponds to 355 to 873 (GLALKVQEQH…SIWTPSNKPT (519 aa)). A mediates interaction with calmodulin region spans residues 357 to 538 (ALKVQEQHRQ…RLYKKKFKET (182 aa)). Lys367 provides a ligand contact to a 1,2-diacyl-sn-glycero-3-phospho-(1D-myo-inositol-4,5-bisphosphate). Disordered stretches follow at residues 575–603 (PGPP…PRNE), 723–742 (RGGP…GSTY), and 766–873 (ELQG…NKPT). Polar residues-rich tracts occupy residues 588–601 (KGSA…QSPR), 725–741 (GPSS…SGST), and 844–873 (DPFT…NKPT).

The protein belongs to the potassium channel family. KQT (TC 1.A.1.15) subfamily. Kv7.3/KCNQ3 sub-subfamily. In terms of assembly, heterotetramer with KCNQ2; forms heterotetrameric M-channel responsible for the native M-current. Interacts with calmodulin; the interaction is calcium-independent, constitutive and participates in the proper assembly of a functional M-channel. Heteromultimer with KCNQ5. May associate with KCNE2. Interacts with IQCJ-SCHIP1. Interacts (via the pore module) with SLC5A3/SMIT1; forms a coregulatory complex that alters ion selectivity, voltage dependence and gating kinetics of the channel. KCNQ2/KCNQ3 are ubiquitinated by NEDD4L. Ubiquitination leads to protein degradation. Degradation induced by NEDD4L is inhibited by USP36. In terms of tissue distribution, expressed in brain and sympathetic ganglia. In brain, expressed in cortex, hippocampus and at much lower levels in cerebellum. In sympathetic ganglia, expressed at approximately equal levels in both superior cervical ganglia and prevertebral ganglia.

Its subcellular location is the cell membrane. It carries out the reaction K(+)(in) = K(+)(out). It catalyses the reaction Rb(+)(in) = Rb(+)(out). The catalysed reaction is Cs(+)(in) = Cs(+)(out). The enzyme catalyses Na(+)(in) = Na(+)(out). Phosphatidylinositol-4,5-bisphosphate (PIP2) potentiates the activation of KCNQ channels by enhancing the electro-mechanical coupling of the voltage-sensing domain (VSD) and the pore-forming domain (PD). In the closed state of the channel, PIP2 is anchored at the S2-S3 loop; upon channel activation, PIP2 interacts with the S4-S5 linker and is involved in channel gating. Calcium suppresses KCNQ2-KCNQ3 channel currents, with calcium-bound calmodulin inducing a change in channel configuration which leads to the reduction of channel affinity for PIP2 and subsequent current suppression. M-channel is blocked by XE991. Functionally, pore-forming subunit of the voltage-gated potassium (Kv) M-channel which is responsible for the M-current, a key controller of neuronal excitability. M-channel is composed of pore-forming subunits KCNQ2 and KCNQ3 assembled as heterotetramers, each subunit containing a voltage sensing domain (VSD) and a pore-forming domain (PD). The native M-current has a slowly activating and deactivating potassium conductance which plays a critical role in determining the subthreshold electrical excitability of neurons as well as the responsiveness to synaptic inputs. M-channel is selectively permeable in vitro to other cations besides potassium, in decreasing order of affinity K(+) &gt; Rb(+) &gt; Cs(+) &gt; Na(+). M-channel association with SLC5A3/SMIT1 alters channel ion selectivity, increasing Na(+) and Cs(+) permeation relative to K(+). Suppressed by activation of M1 muscarinic acetylcholine receptors. KCNQ3 also associates with KCNQ5 to form a functional channel in vitro and may also contribute to the M-current in brain. This Rattus norvegicus (Rat) protein is Potassium voltage-gated channel subfamily KQT member 3.